We begin with the raw amino-acid sequence, 87 residues long: UPF0367 protein Syncc9902_0316 (87 aa).

The protein belongs to the UPF0367 family.

This chain is UPF0367 protein Syncc9902_0316, found in Synechococcus sp. (strain CC9902).